The following is a 357-amino-acid chain: Peptide chain release factor 1 (357 aa).

Gln234 carries the N5-methylglutamine modification. The tract at residues 283-313 is disordered; sequence SKKQEQRSSNRKQQVGSGDRSERIRTYNFPQ.

The protein belongs to the prokaryotic/mitochondrial release factor family. Methylated by PrmC. Methylation increases the termination efficiency of RF1.

The protein resides in the cytoplasm. Peptide chain release factor 1 directs the termination of translation in response to the peptide chain termination codons UAG and UAA. The chain is Peptide chain release factor 1 from Borrelia garinii subsp. bavariensis (strain ATCC BAA-2496 / DSM 23469 / PBi) (Borreliella bavariensis).